The following is a 267-amino-acid chain: 4-hydroxy-tetrahydrodipicolinate reductase (267 aa).

NAD(+) contacts are provided by residues 8–13 (GAAGRM) and glutamate 34. Residue arginine 35 coordinates NADP(+). NAD(+) is bound by residues 98 to 100 (GST) and 122 to 125 (APNM). Histidine 155 serves as the catalytic Proton donor/acceptor. Position 156 (histidine 156) interacts with (S)-2,3,4,5-tetrahydrodipicolinate. The active-site Proton donor is the lysine 159. (S)-2,3,4,5-tetrahydrodipicolinate is bound at residue 165-166 (GT).

It belongs to the DapB family.

The protein localises to the cytoplasm. The catalysed reaction is (S)-2,3,4,5-tetrahydrodipicolinate + NAD(+) + H2O = (2S,4S)-4-hydroxy-2,3,4,5-tetrahydrodipicolinate + NADH + H(+). It catalyses the reaction (S)-2,3,4,5-tetrahydrodipicolinate + NADP(+) + H2O = (2S,4S)-4-hydroxy-2,3,4,5-tetrahydrodipicolinate + NADPH + H(+). Its pathway is amino-acid biosynthesis; L-lysine biosynthesis via DAP pathway; (S)-tetrahydrodipicolinate from L-aspartate: step 4/4. Functionally, catalyzes the conversion of 4-hydroxy-tetrahydrodipicolinate (HTPA) to tetrahydrodipicolinate. The polypeptide is 4-hydroxy-tetrahydrodipicolinate reductase (Citrifermentans bemidjiense (strain ATCC BAA-1014 / DSM 16622 / JCM 12645 / Bem) (Geobacter bemidjiensis)).